A 904-amino-acid chain; its full sequence is Endoplasmic reticulum metallopeptidase 1 (904 aa).

At Met-1 the chain carries N-acetylmethionine. Over 1–63 (MEWGSESAAV…PGGSGGASRG (63 aa)) the chain is Cytoplasmic. The interval 1–65 (MEWGSESAAV…GSGGASRGAG (65 aa)) is disordered. The segment covering 55 to 65 (GGSGGASRGAG) has biased composition (gly residues). Residues 64–84 (AGTGLSEVRAALGLALYLIAL) form a helical membrane-spanning segment. The Lumenal portion of the chain corresponds to 85–399 (RTLVQLSLQQ…AASKYRHGNM (315 aa)). An N-linked (GlcNAc...) asparagine glycan is attached at Asn-182. A disulfide bridge connects residues Cys-204 and Cys-222. Zn(2+)-binding residues include His-205 and Asp-217. Catalysis depends on Glu-251, which acts as the Proton acceptor. The Zn(2+) site is built by Glu-252, Glu-278, and His-354. Residues 400-420 (VFFDVLGLFVIAYPSRIGSII) traverse the membrane as a helical segment. The Cytoplasmic portion of the chain corresponds to 421 to 457 (NYMVVMGVVLYLGKKFLQPKHKTGNYKKDFLCGLGIT). A helical transmembrane segment spans residues 458 to 478 (LISWFTSLVTVLIIAVFISLI). Residues 479-489 (GQSLSWYNHFY) lie on the Lumenal side of the membrane. Residues 490-510 (VSVCLYGTATVAKIILIHTLA) form a helical membrane-spanning segment. At 511 to 519 (KRFYYMNAS) the chain is on the cytoplasmic side. The chain crosses the membrane as a helical span at residues 520 to 540 (AQYLGEVFFDISLFVHCCFLV). A topological domain (lumenal) is located at residue Thr-541. A helical transmembrane segment spans residues 542 to 562 (LTYQGLCSAFISAVWVAFPLL). The Cytoplasmic segment spans residues 563-579 (TKLCVHKDFKQHGAQGK). A helical transmembrane segment spans residues 580–600 (FIAFYLLGMFIPYLYALYLIW). Residues 601 to 621 (AVFEMFTPILGRSGSEIPPDV) lie on the Lumenal side of the membrane. Residues 622–642 (VLASILAGCTMILSSYFINFI) traverse the membrane as a helical segment. Residues 643–651 (YLAKSTKKT) lie on the Cytoplasmic side of the membrane. A helical membrane pass occupies residues 652-672 (MLTLTLVCAITFLLVCSGTFF). Topologically, residues 673–904 (PYSSNPANPK…WVCTYDLFVF (232 aa)) are lumenal. A glycan (N-linked (GlcNAc...) asparagine) is linked at Asn-730.

The protein belongs to the peptidase M28 family. The cofactor is Zn(2+).

The protein resides in the endoplasmic reticulum membrane. Functionally, within the ovary, required for the organization of somatic cells and oocytes into discrete follicular structures. This chain is Endoplasmic reticulum metallopeptidase 1, found in Homo sapiens (Human).